Here is a 513-residue protein sequence, read N- to C-terminus: Serine/threonine-protein kinase ppk8 (513 aa).

Residues 98-114 (LSSTLTSMSEESSSTES) are compositionally biased toward low complexity. The tract at residues 98 to 120 (LSSTLTSMSEESSSTESKFATLN) is disordered. One can recognise a Protein kinase domain in the interval 241-505 (GKLNNVIGEG…ISGARSTTWM (265 aa)). Residues 247 to 255 (IGEGASSFI) and lysine 270 each bind ATP. The active-site Proton acceptor is aspartate 364.

It belongs to the protein kinase superfamily. Ser/Thr protein kinase family.

The protein localises to the cytoplasm. Its subcellular location is the nucleus. The enzyme catalyses L-seryl-[protein] + ATP = O-phospho-L-seryl-[protein] + ADP + H(+). The catalysed reaction is L-threonyl-[protein] + ATP = O-phospho-L-threonyl-[protein] + ADP + H(+). In Schizosaccharomyces pombe (strain 972 / ATCC 24843) (Fission yeast), this protein is Serine/threonine-protein kinase ppk8 (ppk8).